The sequence spans 307 residues: Woronin sorting complex protein (307 aa).

The next 3 helical transmembrane spans lie at 106-125 (MATY…IWIL), 146-167 (NLIV…IAGA), and 207-227 (AWMP…NYIT). A compositionally biased stretch (basic and acidic residues) spans 241-264 (GDGAHGDHRHDRERERDRERERHS). Positions 241–307 (GDGAHGDHRH…YPSLGQNPRY (67 aa)) are disordered. Over residues 266–278 (PPHGHGPSHGGRP) the composition is skewed to low complexity.

It belongs to the peroxisomal membrane protein PXMP2/4 family. As to quaternary structure, self-assembles into detergent-resistant oligomers and forms a complex with hex-1 assemblies.

It is found in the peroxisome membrane. The protein resides in the cell septum. Functionally, woronin sorting complex protein involved in both Woronin bodies (WB) formation and inherence. Localizes to large peroxisome membranes where it self-assembles into detergent-resistant oligomers that envelop hex-1 assemblies, producing asymmetrical nascent WBs. These structures are then delivered to the cell cortex, which permits partitioning of the nascent WB and WB inheritance. This Neurospora crassa (strain ATCC 24698 / 74-OR23-1A / CBS 708.71 / DSM 1257 / FGSC 987) protein is Woronin sorting complex protein.